Reading from the N-terminus, the 162-residue chain is Regulatory protein RecX (162 aa).

It belongs to the RecX family.

Its subcellular location is the cytoplasm. Modulates RecA activity. The polypeptide is Regulatory protein RecX (Xanthomonas oryzae pv. oryzae (strain PXO99A)).